We begin with the raw amino-acid sequence, 504 residues long: Calcium/calmodulin-dependent protein kinase type II (504 aa).

The Protein kinase domain occupies 65-351 (YQLIENLGDG…IHQFFQHPWI (287 aa)). Residues 71–79 (LGDGAFSQV) and Lys-94 contribute to the ATP site. Asp-188 acts as the Proton acceptor in catalysis. Thr-252 bears the Phosphothreonine mark.

The protein belongs to the protein kinase superfamily. CAMK Ser/Thr protein kinase family. CaMK subfamily. Interacts with sty1. Requires Mg(2+) as cofactor. Post-translationally, autophosphorylated.

It localises to the cytoplasm. The protein resides in the barrier septum. The protein localises to the forespore membrane. Its subcellular location is the ascus epiplasm. It catalyses the reaction L-seryl-[protein] + ATP = O-phospho-L-seryl-[protein] + ADP + H(+). The catalysed reaction is L-threonyl-[protein] + ATP = O-phospho-L-threonyl-[protein] + ADP + H(+). Has a role in the regulation of G2/M transition during the mitotic cell cycle. The protein is Calcium/calmodulin-dependent protein kinase type II of Schizosaccharomyces pombe (strain 972 / ATCC 24843) (Fission yeast).